The following is a 209-amino-acid chain: Protein Sxy (209 aa).

This sequence belongs to the Sxy/TfoX family.

Its function is as follows. Induces low levels of natural DNA uptake by inducing transcription of the competence genes (the CRP-S regulon) required for DNA transformation. Induction of the CRP-S regulon also requires Sxy-activated promoter (CRP-S), cAMP receptor protein (CRP) and cAMP. Induces CRP-S site-containing genes which are involved in genome maintenance and transcription or encoding transposases and toxin-antitoxin pairs. This is Protein Sxy from Escherichia coli (strain K12).